Reading from the N-terminus, the 738-residue chain is Alcohol dehydrogenase (quinone), dehydrogenase subunit (738 aa).

Residues 1–35 form the signal peptide; that stretch reads MISAVFGKRRSLSRTLTAGTICAALISGYATMASA. A pyrroloquinoline quinone-binding site is contributed by Glu-97. A disulfide bridge links Cys-143 with Cys-144. Position 149 (Arg-149) interacts with pyrroloquinoline quinone. Residue Glu-217 participates in Ca(2+) binding. Thr-278 provides a ligand contact to pyrroloquinoline quinone. Ca(2+) is bound by residues Asn-298 and Asp-343. Residue Asp-343 is the Proton acceptor of the active site. Lys-370 and Ile-584 together coordinate pyrroloquinoline quinone. Residues 634–738 enclose the Cytochrome c domain; the sequence is FDSKRTDNGY…NADGIPEQLP (105 aa). Heme c-binding residues include Cys-650, Cys-653, His-654, and Met-693.

Belongs to the bacterial PQQ dehydrogenase family. As to quaternary structure, the alcohol dehydrogenase multicomponent enzyme system is composed of a dehydrogenase subunit I (AdhA) and a cytochrome c subunit II (AdhB). Requires pyrroloquinoline quinone as cofactor. Ca(2+) is required as a cofactor. It depends on heme c as a cofactor.

The protein localises to the cell membrane. It carries out the reaction ethanol + a ubiquinone = a ubiquinol + acetaldehyde. Dehydrogenase component of the alcohol dehydrogenase multicomponent enzyme system which is involved in the production of acetic acid and in the ethanol oxidase respiratory chain. Quinohemoprotein alcohol dehydrogenase (ADH) catalyzes the oxidation of ethanol to acetaldehyde by transferring electrons to the ubiquinone embedded in the membrane phospholipids. The electrons transfer from ethanol to membranous ubiquinone occurs from pyrroloquinoline quinone (PQQ) to one heme c in subunit I (AdhA), and finally to two heme c in subunit II (AdhB). Besides ubiquinone reduction, ADH also has a ubiquinol (QH2) oxidation reaction which mediates electron transfer from ubiquinol to the non-energy generating bypass oxidase system. The electrons transfer occurs from ubiquinol (QH2) to the additional heme c within subunit II (AdhB). The protein is Alcohol dehydrogenase (quinone), dehydrogenase subunit (adhA) of Gluconacetobacter polyoxogenes (Acetobacter polyoxogenes).